The primary structure comprises 2541 residues: Talin-1 (2541 aa).

One can recognise an FERM domain in the interval 86 to 403 (RPLKIRMLDG…GYIDIILKKK (318 aa)). T167 carries the post-translational modification Phosphothreonine. Positions 280–435 (FQAHKNCGQM…PKKSTVLQQQ (156 aa)) are interaction with LAYN. Phosphoserine occurs at positions 405, 425, 446, 620, and 729. The segment at 482–655 (RGHMPPLTSA…QASGELLQQI (174 aa)) is helical bundle R1. A helical bundle R2 region spans residues 656-786 (GESDTDPHFQ…ALNELLQHVK (131 aa)). A helical bundle R3 region spans residues 787-911 (AHATGAGPAG…NAAAQNAIKK (125 aa)). The tract at residues 913–1044 (LVQRLEHAAK…RTAAQKAQEA (132 aa)) is helical bundle R4. A Phosphoserine modification is found at S1021. The segment at 1046 to 1206 (GPLEMDSALS…NRCVSCLPGQ (161 aa)) is helical bundle R5. The residue at position 1116 (Y1116) is a Phosphotyrosine. T1142 bears the Phosphothreonine mark. S1201 and S1225 each carry phosphoserine. The interval 1207 to 1357 (RDVDNALRAV…QLITMCTQQA (151 aa)) is helical bundle R6. T1263 is subject to Phosphothreonine. Phosphoserine occurs at positions 1323 and 1328. Positions 1327 to 1948 (ASPNLKSQLA…CSPSDVYTKK (622 aa)) are interaction with SYNM. The interval 1358 to 1453 (PGQKECDNAL…AYLVGVSDPN (96 aa)) is helical bundle R7A; Interaction with KANK1. The interval 1359–1659 (GQKECDNALR…SMRDKAPGQL (301 aa)) is interaction with VCL and F-actin. The interval 1461 to 1580 (LVEPTQFARA…NLSAFASNPE (120 aa)) is helical bundle R8. K1544 is subject to N6-acetyllysine. Residues 1581–1653 (FSSVPAQISP…IKKLITSMRD (73 aa)) are helical bundle R7B; Interaction with KANK1. Positions 1655–1822 (APGQLECETA…TLNEAASAAG (168 aa)) are helical bundle R9. Positions 1823-1973 (VVGGMVDSIT…VLAALQAGNR (151 aa)) are helical bundle R10. S1849 carries the post-translational modification Phosphoserine. At T1855 the chain carries Phosphothreonine. Phosphoserine is present on S1878. Positions 1974 to 2140 (GTQACITAAS…TVKAVEDEAT (167 aa)) are helical bundle R11. N6-acetyllysine is present on K2031. The residue at position 2040 (S2040) is a Phosphoserine. At K2115 the chain carries N6-acetyllysine. Positions 2141–2294 (KGTRALEATT…QAAEAMKGTE (154 aa)) are helical bundle R12. The region spanning 2293-2533 (TEWVDPEDPT…QIRQQQYKFL (241 aa)) is the I/LWEQ domain. Residues 2300–2482 (DPTVIAENEL…AAQKAAAFED (183 aa)) form a helical bundle R13 region.

In terms of assembly, part of a complex composed of THSD1, PTK2/FAK1, TLN1 and VCL. Interacts with THSD1; this promotes interaction with PTK2/FAK1 and VCL. Interacts with NRAP and LAYN. Interacts with SYNM. Interacts with ITGB1; the interaction is prevented by competitive binding of ITGB1BP1. Binds with high affinity to VCL and with low affinity to integrins. Interacts with APBB1IP; this inhibits VCL binding. Interacts with PTK2/FAK1. Interacts with PIP5K1C. Interacts with F-actin. Interacts with SVEP1. Interacts (via R7 domain) with KANK1 or KANK2 (via KN motif); this interaction likely initiates the assembly of cortical microtubule stabilization complexes (CMSCs) at the vicinity of focal adhesions.

It is found in the cell projection. Its subcellular location is the ruffle membrane. The protein resides in the cytoplasm. It localises to the cytoskeleton. The protein localises to the cell surface. It is found in the cell junction. Its subcellular location is the focal adhesion. Functionally, high molecular weight cytoskeletal protein concentrated at regions of cell-matrix and cell-cell contacts. Involved in connections of major cytoskeletal structures to the plasma membrane. With KANK1 co-organize the assembly of cortical microtubule stabilizing complexes (CMSCs) positioned to control microtubule-actin crosstalk at focal adhesions (FAs) rims. This is Talin-1 (Tln1) from Mus musculus (Mouse).